A 410-amino-acid chain; its full sequence is Angiopoietin-related protein 4 (410 aa).

Residues 1–23 form the signal peptide; that stretch reads MRCAPTAGAALVLCAATAGLLSA. Positions 79–101 are disordered; sequence ACQGPKGKDAPFKDSEDRVPEGQ. Residues 84–98 are compositionally biased toward basic and acidic residues; it reads KGKDAPFKDSEDRVP. A coiled-coil region spans residues 104-152; sequence ETLQSLQTQLKAQNSKIQQLFQKVAQQQRYLSKQNLRIQNLQSQIDLLA. Asn-181 carries N-linked (GlcNAc...) asparagine glycosylation. The Fibrinogen C-terminal domain occupies 183–405; the sequence is THLHRPPRDC…ATTLLIQPME (223 aa). Cys-192 and Cys-220 are joined by a disulfide. Asn-236 and Asn-242 each carry an N-linked (GlcNAc...) asparagine glycan. A disulfide bridge links Cys-345 with Cys-358.

As to quaternary structure, homooligomer; disulfide-linked via Cys residues in the N-terminal part of the protein. The homooligomer undergoes proteolytic processing to release the ANGPTL4 C-terminal chain, which circulates as a monomer. The homooligomer unprocessed form is able to interact with the extracellular matrix. Post-translationally, N-glycosylated. Forms disulfide-linked dimers and tetramers. In terms of processing, cleaved into a smaller N-terminal chain and a larger chain that contains the fibrinogen C-terminal domain; both cleaved and uncleaved forms are detected in the extracellular space. The cleaved form is not present within the cell. In terms of tissue distribution, detected in liver and kidney. Predominantly expressed in adipose tissue and is strongly up-regulated by fasting in white adipose tissue and liver. More abundant in areas of lower flow stress in the inner curvature compared to the outer curvature regions of the aorta (at protein level).

Its subcellular location is the secreted. The protein resides in the extracellular space. It localises to the extracellular matrix. In terms of biological role, mediates inactivation of the lipoprotein lipase LPL, and thereby plays a role in the regulation of triglyceride clearance from the blood serum and in lipid metabolism. May also play a role in regulating glucose homeostasis and insulin sensitivity. Inhibits proliferation, migration, and tubule formation of endothelial cells and reduces vascular leakage. Upon heterologous expression, inhibits the adhesion of endothelial cell to the extracellular matrix (ECM), and inhibits the reorganization of the actin cytoskeleton, formation of actin stress fibers and focal adhesions in endothelial cells that have adhered to ANGPTL4-containing ECM (in vitro). Depending on context, may modulate tumor-related angiogenesis. Its function is as follows. Mediates inactivation of the lipoprotein lipase LPL, and thereby plays an important role in the regulation of triglyceride clearance from the blood serum and in lipid metabolism. Has higher activity in LPL inactivation than the uncleaved protein. The sequence is that of Angiopoietin-related protein 4 (Angptl4) from Mus musculus (Mouse).